The following is a 525-amino-acid chain: Ubiquitin carboxyl-terminal hydrolase 22 (525 aa).

The UBP-type zinc finger occupies 21-138 (PGCSHLGSFK…KEEQRKAWKM (118 aa)). Residues Cys-23, His-25, Cys-63, Cys-66, Cys-76, Cys-79, Cys-84, His-89, His-93, His-99, Cys-112, and Cys-115 each contribute to the Zn(2+) site. An N6-acetyllysine modification is found at Lys-129. Thr-147 carries the post-translational modification Phosphothreonine; by CDK1. The USP domain maps to 176-520 (RGLINLGNTC…EGYLLFYHKQ (345 aa)). The active-site Nucleophile is Cys-185. Ser-237 is subject to Phosphoserine; by CDK1. Residue His-479 is the Proton acceptor of the active site.

The protein belongs to the peptidase C19 family. UBP8 subfamily. In terms of assembly, component of some SAGA transcription coactivator-HAT complexes, at least composed of ATXN7, ATXN7L3, ENY2, GCN5L2, SUPT3H, TAF10, TRRAP and USP22. Within the SAGA complex, ATXN7L3, ENY2 and USP22 form a subcomplex required for histone deubiquitination. Interacts directly with ATXN7L3; leading to its recruitment to the SAGA complex. Interacts with ATXN7L3 and weakly with ATXN7L3B. Interacts with MED1. Post-translationally, phosphorylated in G2/M phase, but not in G1 phase by CDK1. Ubiquitinated and subsequently degraded in a CDC20-dependent manner. Moderately expressed in various tissues including heart and skeletal muscle, and weakly expressed in lung and liver.

It is found in the nucleus. Its subcellular location is the cytoplasm. It catalyses the reaction Thiol-dependent hydrolysis of ester, thioester, amide, peptide and isopeptide bonds formed by the C-terminal Gly of ubiquitin (a 76-residue protein attached to proteins as an intracellular targeting signal).. Its function is as follows. Deubiquitinase that plays a role in several cellular processes including transcriptional regulation, cell cycle progression or innate immunity. As part of the transcription regulatory histone acetylation (HAT) complex SAGA, catalyzes the deubiquitination of both histones H2A and H2B, thereby acting as a transcriptional coactivator. Recruited to specific gene promoters by activators such as MYC, where it is required for transcription. Facilitates cell-cycle progression by stabilizing CCNB1 and antagonizing its proteasome-mediated degradation in a cell cycle-specific manner. Modulates cell cycle progression and apoptosis also by antagonizing TP53 transcriptional activation through deacetylase SIRT1 stabilization. Plays multiple roles in immunity and inflammation. Participates in antiviral response by deubiquitinating the importin KPNA2, leading to IRF3 nuclear translocation and subsequent type I interferon production. Acts as a central regulator of type III IFN signaling by negatively regulating STING1 activation and ubiquitination. Inhibits NLRP3 inflammasome activation by promoting NLRP3 degradation through ATG5-dependent autophagy. Deubiquitinates CD274 to induce its stabilization and thereby participates in maintenance of immune tolerance to self. Controls necroptotic cell death by regulating RIPK3 phosphorylation and ubiquitination. During bacterial infection, promotes pro-inflammatory response by targeting TRAF6 and removing its 'Lys-48'-linked polyubiquitination. This is Ubiquitin carboxyl-terminal hydrolase 22 (USP22) from Homo sapiens (Human).